A 600-amino-acid chain; its full sequence is Kynurenine 3-monooxygenase (600 aa).

A disordered region spans residues 217 to 242 (GDSCADEPSGCGGRKQATTKSQGSEY).

Belongs to the aromatic-ring hydroxylase family. KMO subfamily. The cofactor is FAD.

It is found in the mitochondrion outer membrane. It carries out the reaction L-kynurenine + NADPH + O2 + H(+) = 3-hydroxy-L-kynurenine + NADP(+) + H2O. Its pathway is cofactor biosynthesis; NAD(+) biosynthesis; quinolinate from L-kynurenine: step 1/3. Functionally, catalyzes the hydroxylation of L-kynurenine (L-Kyn) to form 3-hydroxy-L-kynurenine (L-3OHKyn). Required for synthesis of quinolinic acid. This is Kynurenine 3-monooxygenase from Mycosarcoma maydis (Corn smut fungus).